The following is a 265-amino-acid chain: Undecaprenyl-diphosphatase (265 aa).

A run of 7 helical transmembrane segments spans residues 42-62 (AATF…VLYW), 82-102 (GIML…AAHS), 108-128 (LFTP…MLLV), 143-163 (MSPA…WPGF), 181-201 (GLAA…ATGY), 221-241 (GFVV…ALVG), and 248-264 (FAWY…YFMA).

The protein belongs to the UppP family.

The protein resides in the cell inner membrane. The enzyme catalyses di-trans,octa-cis-undecaprenyl diphosphate + H2O = di-trans,octa-cis-undecaprenyl phosphate + phosphate + H(+). In terms of biological role, catalyzes the dephosphorylation of undecaprenyl diphosphate (UPP). Confers resistance to bacitracin. This Nitratidesulfovibrio vulgaris (strain DP4) (Desulfovibrio vulgaris) protein is Undecaprenyl-diphosphatase.